The following is a 463-amino-acid chain: Soluble pyridine nucleotide transhydrogenase (463 aa).

35–44 (EKQQAVGGNC) provides a ligand contact to FAD.

This sequence belongs to the class-I pyridine nucleotide-disulfide oxidoreductase family. It depends on FAD as a cofactor.

The protein resides in the cytoplasm. The catalysed reaction is NAD(+) + NADPH = NADH + NADP(+). Functionally, conversion of NADPH, generated by peripheral catabolic pathways, to NADH, which can enter the respiratory chain for energy generation. In Chromohalobacter salexigens (strain ATCC BAA-138 / DSM 3043 / CIP 106854 / NCIMB 13768 / 1H11), this protein is Soluble pyridine nucleotide transhydrogenase.